Reading from the N-terminus, the 483-residue chain is Cobyric acid synthase (483 aa).

Residues 252–439 (KLKVVVPVLT…LHGFLDSEAV (188 aa)) form the GATase cobBQ-type domain. The active-site Nucleophile is C333. H431 is an active-site residue.

It belongs to the CobB/CobQ family. CobQ subfamily.

Its pathway is cofactor biosynthesis; adenosylcobalamin biosynthesis. In terms of biological role, catalyzes amidations at positions B, D, E, and G on adenosylcobyrinic A,C-diamide. NH(2) groups are provided by glutamine, and one molecule of ATP is hydrogenolyzed for each amidation. This chain is Cobyric acid synthase, found in Vibrio vulnificus (strain CMCP6).